Here is a 375-residue protein sequence, read N- to C-terminus: Fructose-1,6-bisphosphate aldolase/phosphatase (375 aa).

Asp-15 acts as the Proton acceptor; for FBP phosphatase activity in catalysis. The Mg(2+) site is built by Asp-15, His-22, Asp-56, and Asp-57. Beta-D-fructose 1,6-bisphosphate is bound at residue His-22. Dihydroxyacetone phosphate is bound at residue His-22. Tyr-94 lines the beta-D-fructose 1,6-bisphosphate pocket. Gln-98 contributes to the Mg(2+) binding site. 107-108 serves as a coordination point for beta-D-fructose 1,6-bisphosphate; it reads GN. Asp-135 contacts Mg(2+). Position 136 (Lys-136) interacts with beta-D-fructose 1,6-bisphosphate. Lys-136 serves as a coordination point for dihydroxyacetone phosphate. Tyr-237 serves as the catalytic Proton donor/acceptor; for FBP aldolase activity. 3 residues coordinate Mg(2+): Lys-240, Asp-241, and Asp-242. Lys-240 serves as the catalytic Schiff-base intermediate with DHAP; for FBP aldolase activity. Beta-D-fructose 1,6-bisphosphate-binding positions include 250-251, Arg-274, Asp-295, and Tyr-357; that span reads QS. Dihydroxyacetone phosphate is bound by residues Arg-274 and Asp-295.

It belongs to the FBP aldolase/phosphatase family. Homooctamer; dimer of tetramers. The cofactor is Mg(2+).

It catalyses the reaction beta-D-fructose 1,6-bisphosphate = D-glyceraldehyde 3-phosphate + dihydroxyacetone phosphate. The enzyme catalyses beta-D-fructose 1,6-bisphosphate + H2O = beta-D-fructose 6-phosphate + phosphate. Its pathway is carbohydrate biosynthesis; gluconeogenesis. FBPase activity is inhibited by Ca(2+), ATP, ADP and phosphoenolpyruvate. Functionally, catalyzes two subsequent steps in gluconeogenesis: the aldol condensation of dihydroxyacetone phosphate (DHAP) and glyceraldehyde-3-phosphate (GA3P) to fructose-1,6-bisphosphate (FBP), and the dephosphorylation of FBP to fructose-6-phosphate (F6P). Can also dephosphorylate, with lower activity, other related substrates including fructose-1-phosphate, fructose-6-phosphate, glucose-1-phosphate, glucose-6-phosphate, glycerol-2-phosphate, phosphoenolpyruvate, 5'-AMP, 6'-ADP and 7'-ATP. The polypeptide is Fructose-1,6-bisphosphate aldolase/phosphatase (Thermococcus onnurineus (strain NA1)).